A 326-amino-acid chain; its full sequence is D-allose transport system permease protein AlsC (326 aa).

Residues 1–18 are Cytoplasmic-facing; that stretch reads MGFTTRVKSEASEKKPFN. A helical transmembrane segment spans residues 19 to 39; the sequence is FALFWDKYGTFFILAIIVAIF. Topologically, residues 40 to 70 are periplasmic; sequence GSLSPEYFLTTNNITQIFVQSSVTVLIGMGE. A helical transmembrane segment spans residues 71–91; that stretch reads FFAILVAGIDLSVGAILALSG. Residues 92 to 101 lie on the Cytoplasmic side of the membrane; sequence MVTAKLMLAG. A helical membrane pass occupies residues 102-122; that stretch reads VDPFLAAMIGGVLVGGALGAI. Residues 123-124 lie on the Periplasmic side of the membrane; it reads NG. A helical membrane pass occupies residues 125 to 145; sequence CLVNWTGLHPFIITLGTNAIF. The Cytoplasmic portion of the chain corresponds to 146–149; that stretch reads RGIT. Residues 150-170 form a helical membrane-spanning segment; sequence LVISDANSVYGFSFDFVNFFA. The Periplasmic segment spans residues 171 to 172; it reads AS. Residues 173 to 193 form a helical membrane-spanning segment; that stretch reads VIGIPVPVIFSLIVALILWFL. Topologically, residues 194–221 are cytoplasmic; the sequence is TTRMRLGRNIYALGGNKNSAFYSGIDVK. The chain crosses the membrane as a helical span at residues 222–242; that stretch reads FHILVVFIISGVCAGLAGVVS. Over 243-252 the chain is Periplasmic; it reads TARLGAAEPL. Residues 253 to 273 form a helical membrane-spanning segment; sequence AGMGFETYAIASAIIGGTSFF. At 274–278 the chain is on the cytoplasmic side; it reads GGKGR. Helical transmembrane passes span 279–299 and 300–320; these read IFSVVIGGLIIGTINNGLNIL and QVQTYYQLVVMGGLIIAAVAL. Residues 321–326 lie on the Cytoplasmic side of the membrane; sequence DRLISK.

This sequence belongs to the binding-protein-dependent transport system permease family. AraH/RbsC subfamily.

The protein localises to the cell inner membrane. Functionally, part of the binding-protein-dependent transport system AlsBAC for D-allose; probably responsible for the translocation of the substrate across the membrane. This chain is D-allose transport system permease protein AlsC (alsC), found in Escherichia coli (strain K12).